Consider the following 395-residue polypeptide: Formate-dependent phosphoribosylglycinamide formyltransferase (395 aa).

N(1)-(5-phospho-beta-D-ribosyl)glycinamide-binding positions include 22–23 (EL) and Glu-82. ATP contacts are provided by residues Arg-115, Lys-156, 161–166 (SSGKGQ), 196–199 (EGFI), and Glu-204. The ATP-grasp domain occupies 120–309 (RLAAETLGLP…EFALHARAIL (190 aa)). Positions 268 and 280 each coordinate Mg(2+). N(1)-(5-phospho-beta-D-ribosyl)glycinamide is bound by residues Asp-287, Lys-356, and 363-364 (RR).

Belongs to the PurK/PurT family. Homodimer.

The catalysed reaction is N(1)-(5-phospho-beta-D-ribosyl)glycinamide + formate + ATP = N(2)-formyl-N(1)-(5-phospho-beta-D-ribosyl)glycinamide + ADP + phosphate + H(+). The protein operates within purine metabolism; IMP biosynthesis via de novo pathway; N(2)-formyl-N(1)-(5-phospho-D-ribosyl)glycinamide from N(1)-(5-phospho-D-ribosyl)glycinamide (formate route): step 1/1. Functionally, involved in the de novo purine biosynthesis. Catalyzes the transfer of formate to 5-phospho-ribosyl-glycinamide (GAR), producing 5-phospho-ribosyl-N-formylglycinamide (FGAR). Formate is provided by PurU via hydrolysis of 10-formyl-tetrahydrofolate. The protein is Formate-dependent phosphoribosylglycinamide formyltransferase of Stenotrophomonas maltophilia (strain R551-3).